The primary structure comprises 98 residues: Co-chaperonin GroES 5 (98 aa).

It belongs to the GroES chaperonin family. Heptamer of 7 subunits arranged in a ring. Interacts with the chaperonin GroEL.

The protein resides in the cytoplasm. Functionally, together with the chaperonin GroEL, plays an essential role in assisting protein folding. The GroEL-GroES system forms a nano-cage that allows encapsulation of the non-native substrate proteins and provides a physical environment optimized to promote and accelerate protein folding. GroES binds to the apical surface of the GroEL ring, thereby capping the opening of the GroEL channel. The chain is Co-chaperonin GroES 5 from Mesorhizobium japonicum (strain LMG 29417 / CECT 9101 / MAFF 303099) (Mesorhizobium loti (strain MAFF 303099)).